The primary structure comprises 73 residues: Antimicrobial peptide TsAP-1 (73 aa).

The signal sequence occupies residues 1–22 (MQIKHLITLFFLVLIVADQCSA). A Lysine amide modification is found at lysine 39. The propeptide occupies 45–73 (EISAQIEQYKDLQKREAELEELLDRLPMY).

As to expression, expressed by the venom gland.

Its subcellular location is the secreted. Has a low antimicrobial activity against S.aureus, E.coli, and C.albicans (MICs 120-160 uM). Has a low hemolytic activity (4% at 160 uM). Also inhibits the growth of two cancer cell lines on a total of five (the squamous carcinoma cell line H157 (IC(50)=55.9 uM) and the lung adenocarcinoma cell line H838 (IC(50)=52.5 uM)). The sequence is that of Antimicrobial peptide TsAP-1 from Tityus serrulatus (Brazilian scorpion).